The sequence spans 410 residues: MAILIYALACAFGLGSWLAINGLWVELPIIVTTLPEGWELPSYLTVIIQLANLGPLLVTLMHKLCPGRLKESVVIYTILCIGVLACFLLAFFLGRDNCGGWGPAQRSLLHHYFLPGTSGLHLLSHLPALHDAAACPLHHHTEGGDTYVLQTQYLPPNFTTEVFFFFLAVMMCISLAAFWKLNRLPRTFEVSTENLVPDSVSSVCSGLDNPAVRTNSQKHLCEVTSQARPLLTKSGHSMFQLTFIYLMVVWVNGTTNGLLPSVQTYSCMPYGNLAYHLSAALASVANPVACIVAMFFPKRSLVFLGLLCVMGTGFASYNMAMAAMSPCPLLQKSALGEAIIVLSWVFFTGSLSYVKVMVGVILRDESHSALVWCGAAAQIGSLIGSVIMFPLINMYNLFQSGDTCSTKCPL.

A run of 3 helical transmembrane segments spans residues 3-23 (ILIY…INGL), 40-60 (LPSY…LVTL), and 73-93 (VVIY…AFFL). Residue Asn157 is glycosylated (N-linked (GlcNAc...) asparagine). Transmembrane regions (helical) follow at residues 158–178 (FTTE…LAAF), 239–259 (FQLT…NGLL), 277–297 (LSAA…MFFP), 301–321 (LVFL…NMAM), 334–354 (ALGE…LSYV), and 369–389 (ALVW…VIMF).

The protein belongs to the riboflavin transporter family.

The protein localises to the cell membrane. The catalysed reaction is riboflavin(in) = riboflavin(out). Functionally, plasma membrane transporter mediating the uptake by cells of the water soluble vitamin B2/riboflavin that plays a key role in biochemical oxidation-reduction reactions of the carbohydrate, lipid, and amino acid metabolism. This Osmerus mordax (Rainbow smelt) protein is Solute carrier family 52, riboflavin transporter, member 3 (slc52a3).